Reading from the N-terminus, the 561-residue chain is Lysine--tRNA ligase (561 aa).

Mg(2+) contacts are provided by Glu-409 and Glu-416.

The protein belongs to the class-II aminoacyl-tRNA synthetase family. In terms of assembly, homodimer. Mg(2+) serves as cofactor.

It localises to the cytoplasm. It catalyses the reaction tRNA(Lys) + L-lysine + ATP = L-lysyl-tRNA(Lys) + AMP + diphosphate. In Nostoc sp. (strain PCC 7120 / SAG 25.82 / UTEX 2576), this protein is Lysine--tRNA ligase.